The primary structure comprises 763 residues: Lysine-specific histone demethylase 1 homolog 2 (763 aa).

In terms of domain architecture, SWIRM spans 53 to 152 (QRETETEALI…FGVSAAFPAS (100 aa)). Residues Glu-192, Arg-194, Arg-200, and Glu-571 each coordinate FAD.

It belongs to the flavin monoamine oxidase family. Requires FAD as cofactor.

Functionally, probable histone demethylase. The sequence is that of Lysine-specific histone demethylase 1 homolog 2 from Oryza sativa subsp. japonica (Rice).